We begin with the raw amino-acid sequence, 452 residues long: GTPase Der (452 aa).

2 consecutive EngA-type G domains span residues 4–169 (PIVA…PPPE) and 177–352 (IKVA…EEHR). GTP-binding positions include 10-17 (GRPNVGKS), 57-61 (DTGGL), 120-123 (NKCE), 183-190 (GRPNVGKS), 230-234 (DTAGI), and 295-298 (NKWD). The KH-like domain maps to 353–438 (RRVTTAVINE…PIRLLWRGKK (86 aa)).

It belongs to the TRAFAC class TrmE-Era-EngA-EngB-Septin-like GTPase superfamily. EngA (Der) GTPase family. As to quaternary structure, associates with the 50S ribosomal subunit.

In terms of biological role, GTPase that plays an essential role in the late steps of ribosome biogenesis. The sequence is that of GTPase Der from Rippkaea orientalis (strain PCC 8801 / RF-1) (Cyanothece sp. (strain PCC 8801)).